A 90-amino-acid polypeptide reads, in one-letter code: Phosphocarrier protein HPr (90 aa).

The region spanning 1–89 (MPAREITIIN…ELINNFFDEG (89 aa)) is the HPr domain. Catalysis depends on histidine 15, which acts as the Pros-phosphohistidine intermediate.

It belongs to the HPr family.

Its subcellular location is the cytoplasm. In terms of biological role, general (non sugar-specific) component of the phosphoenolpyruvate-dependent sugar phosphotransferase system (sugar PTS). This major carbohydrate active-transport system catalyzes the phosphorylation of incoming sugar substrates concomitantly with their translocation across the cell membrane. The phosphoryl group from phosphoenolpyruvate (PEP) is transferred to the phosphoryl carrier protein HPr by enzyme I. Phospho-HPr then transfers it to the PTS EIIA domain. This Pseudomonas putida (Arthrobacter siderocapsulatus) protein is Phosphocarrier protein HPr (ptsH).